The sequence spans 694 residues: Scarecrow-like protein 33 (694 aa).

The tract at residues 289–313 (PAKASTFSKSPKGEKPEASGNSYTK) is disordered. The GRAS domain maps to 309–692 (NSYTKETPDL…RIVYGSSIWV (384 aa)). The tract at residues 316–376 (PDLRTMLVSC…EARLAGIGTQ (61 aa)) is leucine repeat I (LRI). The tract at residues 395–462 (YQTYISVCPF…GSSCKLRITG (68 aa)) is VHIID. The short motif at 428–432 (IHIID) is the VHIID element. The segment at 478–510 (ETGRRLAKYCQKFNIPFEYNAIAQKWESIKLED) is leucine repeat II (LRII). Positions 519–613 (VAVNSLFRFR…KEFYGREIMN (95 aa)) are PFYRE. The segment at 616–692 (ACEGTERVER…RIVYGSSIWV (77 aa)) is SAW.

The protein belongs to the GRAS family. Interacts with SNRNP35.

The protein resides in the nucleus. Its function is as follows. Probable transcription factor involved in plant development. This chain is Scarecrow-like protein 33 (SCL33), found in Arabidopsis thaliana (Mouse-ear cress).